Reading from the N-terminus, the 366-residue chain is 3-dehydroquinate synthase (366 aa).

Residues 69-74 (DGEAFK), 103-107 (GVIGD), 127-128 (TT), lysine 140, and lysine 149 each bind NAD(+). Positions 182, 245, and 262 each coordinate Zn(2+).

This sequence belongs to the sugar phosphate cyclases superfamily. Dehydroquinate synthase family. Requires Co(2+) as cofactor. Zn(2+) is required as a cofactor. The cofactor is NAD(+).

Its subcellular location is the cytoplasm. It carries out the reaction 7-phospho-2-dehydro-3-deoxy-D-arabino-heptonate = 3-dehydroquinate + phosphate. It participates in metabolic intermediate biosynthesis; chorismate biosynthesis; chorismate from D-erythrose 4-phosphate and phosphoenolpyruvate: step 2/7. Its function is as follows. Catalyzes the conversion of 3-deoxy-D-arabino-heptulosonate 7-phosphate (DAHP) to dehydroquinate (DHQ). This is 3-dehydroquinate synthase from Pseudomonas fluorescens (strain Pf0-1).